Reading from the N-terminus, the 492-residue chain is ATP synthase subunit beta, chloroplastic (492 aa).

Position 170–177 (170–177 (GGAGVGKT)) interacts with ATP.

The protein belongs to the ATPase alpha/beta chains family. In terms of assembly, F-type ATPases have 2 components, CF(1) - the catalytic core - and CF(0) - the membrane proton channel. CF(1) has five subunits: alpha(3), beta(3), gamma(1), delta(1), epsilon(1). CF(0) has four main subunits: a(1), b(1), b'(1) and c(9-12).

Its subcellular location is the plastid. It is found in the chloroplast thylakoid membrane. It catalyses the reaction ATP + H2O + 4 H(+)(in) = ADP + phosphate + 5 H(+)(out). Its function is as follows. Produces ATP from ADP in the presence of a proton gradient across the membrane. The catalytic sites are hosted primarily by the beta subunits. The polypeptide is ATP synthase subunit beta, chloroplastic (Angiopteris evecta (Mule's foot fern)).